The primary structure comprises 66 residues: DNA-directed RNA polymerase subunit Rpo10 (66 aa).

Zn(2+)-binding residues include C7, C10, C44, and C45.

The protein belongs to the archaeal Rpo10/eukaryotic RPB10 RNA polymerase subunit family. Part of the RNA polymerase complex. Requires Zn(2+) as cofactor.

It localises to the cytoplasm. It catalyses the reaction RNA(n) + a ribonucleoside 5'-triphosphate = RNA(n+1) + diphosphate. Its function is as follows. DNA-dependent RNA polymerase (RNAP) catalyzes the transcription of DNA into RNA using the four ribonucleoside triphosphates as substrates. This Sulfurisphaera tokodaii (strain DSM 16993 / JCM 10545 / NBRC 100140 / 7) (Sulfolobus tokodaii) protein is DNA-directed RNA polymerase subunit Rpo10.